A 363-amino-acid polypeptide reads, in one-letter code: Aminomethyltransferase (363 aa).

The protein belongs to the GcvT family. As to quaternary structure, the glycine cleavage system is composed of four proteins: P, T, L and H.

The catalysed reaction is N(6)-[(R)-S(8)-aminomethyldihydrolipoyl]-L-lysyl-[protein] + (6S)-5,6,7,8-tetrahydrofolate = N(6)-[(R)-dihydrolipoyl]-L-lysyl-[protein] + (6R)-5,10-methylene-5,6,7,8-tetrahydrofolate + NH4(+). Its function is as follows. The glycine cleavage system catalyzes the degradation of glycine. The protein is Aminomethyltransferase of Prosthecochloris aestuarii (strain DSM 271 / SK 413).